The sequence spans 326 residues: Probable GTP 3',8-cyclase (326 aa).

Residues 6–235 (LYGRPVLSLR…NRPRYIIRTQ (230 aa)) enclose the Radical SAM core domain. Residue Arg15 participates in GTP binding. Cys22, Cys26, and Cys29 together coordinate [4Fe-4S] cluster. Lys62 lines the GTP pocket. Gly66 is an S-adenosyl-L-methionine binding site. Residue Thr92 participates in GTP binding. Residue Ser116 coordinates S-adenosyl-L-methionine. Residue Lys153 coordinates GTP. Residues Cys253 and Cys256 each contribute to the [4Fe-4S] cluster site. 258–260 (RLR) contacts GTP. Residue Cys270 coordinates [4Fe-4S] cluster.

It belongs to the radical SAM superfamily. MoaA family. The cofactor is [4Fe-4S] cluster.

It catalyses the reaction GTP + AH2 + S-adenosyl-L-methionine = (8S)-3',8-cyclo-7,8-dihydroguanosine 5'-triphosphate + 5'-deoxyadenosine + L-methionine + A + H(+). It functions in the pathway cofactor biosynthesis; molybdopterin biosynthesis. In terms of biological role, catalyzes the cyclization of GTP to (8S)-3',8-cyclo-7,8-dihydroguanosine 5'-triphosphate. This Thermoplasma volcanium (strain ATCC 51530 / DSM 4299 / JCM 9571 / NBRC 15438 / GSS1) protein is Probable GTP 3',8-cyclase.